A 396-amino-acid polypeptide reads, in one-letter code: DNA polymerase IV (396 aa).

In terms of domain architecture, UmuC spans 5–192; the sequence is IFHVDVNSAF…LPVGELFMVG (188 aa). Residues Asp9 and Asp111 each coordinate Mg(2+). Glu112 is an active-site residue.

The protein belongs to the DNA polymerase type-Y family. In terms of assembly, monomer. Mg(2+) serves as cofactor.

It localises to the cytoplasm. The enzyme catalyses DNA(n) + a 2'-deoxyribonucleoside 5'-triphosphate = DNA(n+1) + diphosphate. Functionally, poorly processive, error-prone DNA polymerase involved in untargeted mutagenesis. Copies undamaged DNA at stalled replication forks, which arise in vivo from mismatched or misaligned primer ends. These misaligned primers can be extended by PolIV. Exhibits no 3'-5' exonuclease (proofreading) activity. May be involved in translesional synthesis, in conjunction with the beta clamp from PolIII. The chain is DNA polymerase IV from Clostridium acetobutylicum (strain ATCC 824 / DSM 792 / JCM 1419 / IAM 19013 / LMG 5710 / NBRC 13948 / NRRL B-527 / VKM B-1787 / 2291 / W).